A 98-amino-acid chain; its full sequence is DNA-directed RNA polymerase subunit omega (98 aa).

This sequence belongs to the RNA polymerase subunit omega family. As to quaternary structure, the RNAP catalytic core consists of 2 alpha, 1 beta, 1 beta' and 1 omega subunit. When a sigma factor is associated with the core the holoenzyme is formed, which can initiate transcription.

It carries out the reaction RNA(n) + a ribonucleoside 5'-triphosphate = RNA(n+1) + diphosphate. In terms of biological role, promotes RNA polymerase assembly. Latches the N- and C-terminal regions of the beta' subunit thereby facilitating its interaction with the beta and alpha subunits. This Xylella fastidiosa (strain M12) protein is DNA-directed RNA polymerase subunit omega.